A 318-amino-acid chain; its full sequence is Cytochrome f (318 aa).

Residues 1–33 (MKNTFSWIKKEITRSISLSLMIYIITRTSISNA) form the signal peptide. Positions 34, 54, 57, and 58 each coordinate heme. Residues 284–304 (VQGLLFFLASVILAQIFLVLK) form a helical membrane-spanning segment.

Belongs to the cytochrome f family. In terms of assembly, the 4 large subunits of the cytochrome b6-f complex are cytochrome b6, subunit IV (17 kDa polypeptide, petD), cytochrome f and the Rieske protein, while the 4 small subunits are PetG, PetL, PetM and PetN. The complex functions as a dimer. It depends on heme as a cofactor.

Its subcellular location is the plastid. The protein resides in the chloroplast thylakoid membrane. Its function is as follows. Component of the cytochrome b6-f complex, which mediates electron transfer between photosystem II (PSII) and photosystem I (PSI), cyclic electron flow around PSI, and state transitions. This Oenothera biennis (German evening primrose) protein is Cytochrome f.